The sequence spans 177 residues: Large ribosomal subunit protein uL6 (177 aa).

This sequence belongs to the universal ribosomal protein uL6 family. As to quaternary structure, part of the 50S ribosomal subunit.

Functionally, this protein binds to the 23S rRNA, and is important in its secondary structure. It is located near the subunit interface in the base of the L7/L12 stalk, and near the tRNA binding site of the peptidyltransferase center. The protein is Large ribosomal subunit protein uL6 of Delftia acidovorans (strain DSM 14801 / SPH-1).